Reading from the N-terminus, the 572-residue chain is Sulfate adenylyltransferase (572 aa).

The N-terminal stretch occupies residues Met-1–Tyr-169. The segment at Asp-170–Thr-393 is catalytic. Position 197 (Gln-197) interacts with sulfate. Residues Gln-197–Asn-200 and Gly-291–His-294 each bind ATP. Residues Thr-198, Arg-199, and Asn-200 contribute to the active site. Arg-199 provides a ligand contact to sulfate. Position 295 (Ala-295) interacts with sulfate. Val-333 provides a ligand contact to ATP. The tract at residues Gln-394–Gln-572 is allosteric regulation domain; adenylyl-sulfate kinase-like. 3'-phosphoadenylyl sulfate-binding positions include Asp-433–Arg-436, Arg-450, Ile-476–Ala-477, and Arg-514.

It in the N-terminal section; belongs to the sulfate adenylyltransferase family. In the C-terminal section; belongs to the APS kinase family. Homohexamer. Dimer of trimers.

Its subcellular location is the cytoplasm. It catalyses the reaction sulfate + ATP + H(+) = adenosine 5'-phosphosulfate + diphosphate. The protein operates within sulfur metabolism; hydrogen sulfide biosynthesis; sulfite from sulfate: step 1/3. Its activity is regulated as follows. Allosterically inhibited by 3'-phosphoadenosine 5'-phosphosulfate (PAPS). Catalyzes the first intracellular reaction of sulfate assimilation, forming adenosine-5'-phosphosulfate (APS) from inorganic sulfate and ATP. Plays an important role in sulfate activation as a component of the biosynthesis pathway of sulfur-containing amino acids. The chain is Sulfate adenylyltransferase from Penicillium chrysogenum (Penicillium notatum).